The primary structure comprises 749 residues: Cytosolic phospholipase A2 (749 aa).

The tract at residues 1 to 178 is phospholipid binding; the sequence is MSFIDPYQHI…MKKLLGPKNS (178 aa). A Phosphoserine modification is found at serine 2. Residues 6–122 form the C2 domain; the sequence is PYQHIIVEHQ…KVGEKKEVPF (117 aa). Ca(2+)-binding residues include aspartate 40, threonine 41, aspartate 43, asparagine 65, aspartate 93, alanine 94, and asparagine 95. Positions 140-740 constitute a PLA2c domain; it reads SCPDLRFSMA…SNVEARRFFN (601 aa). The Nucleophile role is filled by serine 228. Threonine 268 is modified (phosphothreonine). Residues 409–457 form a disordered region; that stretch reads GSQSRGSTMEEELENITTKHIVSNDSSDSDDESHEPKGTENEDAGSDYQ. Serine 434, serine 435, and serine 437 each carry phosphoserine. Serine 505 is subject to Phosphoserine; by MAPK. Serine 515 is modified (phosphoserine). Lysine 541 is covalently cross-linked (Glycyl lysine isopeptide (Lys-Gly) (interchain with G-Cter in SUMO2)). Catalysis depends on aspartate 549, which acts as the Proton acceptor. Residue lysine 606 forms a Glycyl lysine isopeptide (Lys-Gly) (interchain with G-Cter in SUMO2) linkage. Phosphoserine occurs at positions 727 and 729.

As to quaternary structure, interacts with KAT5. In terms of processing, phosphorylated at both Ser-505 and Ser-727 in response to mitogenic stimuli.

The protein localises to the cytoplasm. Its subcellular location is the golgi apparatus membrane. It is found in the nucleus envelope. It catalyses the reaction a 1,2-diacyl-sn-glycero-3-phosphocholine + H2O = a 1-acyl-sn-glycero-3-phosphocholine + a fatty acid + H(+). The catalysed reaction is a 1-O-alkyl-2-acyl-sn-glycero-3-phosphocholine + H2O = a 1-O-alkyl-sn-glycero-3-phosphocholine + a fatty acid + H(+). The enzyme catalyses a 1-acyl-sn-glycero-3-phosphocholine + H2O = sn-glycerol 3-phosphocholine + a fatty acid + H(+). It carries out the reaction 1-hexadecanoyl-2-(5Z,8Z,11Z,14Z-eicosatetraenoyl)-sn-glycero-3-phosphocholine + H2O = 1-hexadecanoyl-sn-glycero-3-phosphocholine + (5Z,8Z,11Z,14Z)-eicosatetraenoate + H(+). It catalyses the reaction 1,2-di-(5Z,8Z,11Z,14Z-eicosatetraenoyl)-sn-glycero-3-phosphocholine + H2O = 1-(5Z,8Z,11Z,14Z-eicosatetraenoyl)-sn-glycero-3-phosphocholine + (5Z,8Z,11Z,14Z)-eicosatetraenoate + H(+). The catalysed reaction is 1-octadecanoyl-2-(5Z,8Z,11Z,14Z-eicosatetraenoyl)-sn-glycero-3-phosphocholine + H2O = 1-octadecanoyl-sn-glycero-3-phosphocholine + (5Z,8Z,11Z,14Z)-eicosatetraenoate + H(+). The enzyme catalyses 1-hexadecanoyl-2-(9Z,12Z-octadecadienoyl)-sn-glycero-3-phosphocholine + H2O = (9Z,12Z)-octadecadienoate + 1-hexadecanoyl-sn-glycero-3-phosphocholine + H(+). It carries out the reaction 1-octadecanoyl-2-(9Z,12Z,15Z-octadecatrienoyl)-sn-glycero-3-phosphocholine + H2O = (9Z,12Z,15Z)-octadecatrienoate + 1-octadecanoyl-sn-glycero-3-phosphocholine + H(+). It catalyses the reaction 1-(5Z,8Z,11Z,14Z-eicosatetraenoyl)-2-hexadecanoyl-sn-glycero-3-phosphocholine + H2O = 1-(5Z,8Z,11Z,14Z-eicosatetraenoyl)-sn-glycero-3-phosphocholine + hexadecanoate + H(+). The catalysed reaction is 1-O-hexadecyl-2-(5Z,8Z,11Z,14Z)-eicosatetraenoyl-sn-glycero-3-phosphocholine + H2O = 1-O-hexadecyl-sn-glycero-3-phosphocholine + (5Z,8Z,11Z,14Z)-eicosatetraenoate + H(+). The enzyme catalyses 1,2-di-(9Z-octadecenoyl)-sn-glycero-3-phospho-(1'-sn-glycerol) + H2O = 1-(9Z-octadecenoyl)-sn-glycero-3-phospho-(1'-sn-glycerol) + (9Z)-octadecenoate + H(+). It carries out the reaction 1-octadecanoyl-2-(5Z,8Z,11Z,14Z-eicosatetraenoyl)-sn-glycero-3-phosphate + H2O = 1-octadecanoyl-sn-glycero-3-phosphate + (5Z,8Z,11Z,14Z)-eicosatetraenoate + H(+). It catalyses the reaction 1-hexadecanoyl-sn-glycero-3-phosphocholine + H2O = sn-glycerol 3-phosphocholine + hexadecanoate + H(+). The catalysed reaction is 2-(prostaglandin E2)-sn-glycero-3-phosphoethanolamine + H2O = sn-glycero-3-phosphoethanolamine + prostaglandin E2 + H(+). The enzyme catalyses 2-[(15S)-hydroxy-(5Z,8Z,11Z,13E)-eicosatetraenoyl]-sn-glycero-3-phosphocholine + H2O = (15S)-hydroxy-(5Z,8Z,11Z,13E)-eicosatetraenoate + sn-glycerol 3-phosphocholine + H(+). It carries out the reaction 2-[(15R)-hydroxy-(5Z,8Z,11Z,13E)-eicosatetraenoyl]-sn-glycero-3-phosphocholine + H2O = (15R)-hydroxy-(5Z,8Z,11Z,13E)-eicosatetraenoate + sn-glycerol 3-phosphocholine + H(+). It catalyses the reaction 2-(prostaglandin E2)-sn-glycero-3-phosphocholine + H2O = prostaglandin E2 + sn-glycerol 3-phosphocholine + H(+). The catalysed reaction is 2-[(11R)-hydroxy-(5Z,8Z,12E,14Z)-eicosatetraenoyl]-sn-glycero-3-phosphocholine + H2O = (11R)-hydroxy-(5Z,8Z,12E,14Z)-eicosatetraenoate + sn-glycerol 3-phosphocholine + H(+). The enzyme catalyses 1-(5Z,8Z,11Z,14Z-eicosatetraenoyl)-2-O-hexadecyl-sn-glycero-3-phosphocholine + H2O = 2-O-hexadecyl-sn-glycero-3-phosphocholine + (5Z,8Z,11Z,14Z)-eicosatetraenoate + H(+). It carries out the reaction 1-octadecanoyl-2-(5Z,8Z,11Z,14Z-eicosatetraenoyl)-sn-glycero-3-phosphocholine + glycerol = 1-(5Z,8Z,11Z,14Z-eicosatetraenoyl)-glycerol + 1-octadecanoyl-sn-glycero-3-phosphocholine. It catalyses the reaction 1-octadecanoyl-2-(9Z,12Z,15Z-octadecatrienoyl)-sn-glycero-3-phosphocholine + glycerol = 1-(9Z,12Z,15Z-octadecatrienoyl)-glycerol + 1-octadecanoyl-sn-glycero-3-phosphocholine. It functions in the pathway membrane lipid metabolism; glycerophospholipid metabolism. The protein operates within lipid metabolism; arachidonate metabolism. Its pathway is lipid metabolism; prostaglandin biosynthesis. It participates in lipid metabolism; leukotriene B4 biosynthesis. Its activity is regulated as follows. Activated by cytosolic calcium, which is necessary for binding to membrane lipids. Activated by phosphorylation in response to mitogenic stimuli. Has primarily calcium-dependent phospholipase and lysophospholipase activities, with a major role in membrane lipid remodeling and biosynthesis of lipid mediators of the inflammatory response. Plays an important role in embryo implantation and parturition through its ability to trigger prostanoid production. Preferentially hydrolyzes the ester bond of the fatty acyl group attached at sn-2 position of phospholipids (phospholipase A2 activity). Selectively hydrolyzes sn-2 arachidonoyl group from membrane phospholipids, providing the precursor for eicosanoid biosynthesis via the cyclooxygenase pathway. In an alternative pathway of eicosanoid biosynthesis, hydrolyzes sn-2 fatty acyl chain of eicosanoid lysophopholipids to release free bioactive eicosanoids. Hydrolyzes the ester bond of the fatty acyl group attached at sn-1 position of phospholipids (phospholipase A1 activity) only if an ether linkage rather than an ester linkage is present at the sn-2 position. This hydrolysis is not stereospecific. Has calcium-independent phospholipase A2 and lysophospholipase activities in the presence of phosphoinositides. Has O-acyltransferase activity. Catalyzes the transfer of fatty acyl chains from phospholipids to a primary hydroxyl group of glycerol (sn-1 or sn-3), potentially contributing to monoacylglycerol synthesis. The chain is Cytosolic phospholipase A2 (PLA2G4A) from Pongo abelii (Sumatran orangutan).